The following is a 222-amino-acid chain: Ras-related protein RABA4d (222 aa).

Residue 22–29 coordinates GTP; it reads GDSAVGKT. Positions 44-52 match the Effector region motif; that stretch reads SKATIGVEF. GTP-binding positions include 70–74, 128–131, and 158–159; these read DTAGQ, NKCD, and SA. S-geranylgeranyl cysteine attachment occurs at residues C218 and C219.

This sequence belongs to the small GTPase superfamily. Rab family. As to quaternary structure, interacts with PI4KB1. As to expression, specifically expressed in pollen and localized to the tips of growing pollen tubes.

It is found in the cytoplasmic vesicle membrane. Functionally, intracellular vesicle trafficking and protein transport. Plays an important role in the regulation of pollen tube tip growth. The chain is Ras-related protein RABA4d (RABA4D) from Arabidopsis thaliana (Mouse-ear cress).